The primary structure comprises 265 residues: SPbeta prophage-derived uncharacterized protein YomU (265 aa).

Residues 238–265 (KADGTKGVVTSDEGTGSSQSSDLGGTTE) form a disordered region. Polar residues predominate over residues 249 to 265 (DEGTGSSQSSDLGGTTE).

The sequence is that of SPbeta prophage-derived uncharacterized protein YomU (yomU) from Bacillus subtilis (strain 168).